The sequence spans 259 residues: Undecaprenyl-diphosphatase 4 (259 aa).

The next 8 helical transmembrane spans lie at 1–21 (MNWL…FLPI), 39–59 (AGLF…FIYY), 71–91 (FSKL…IGLL), 99–119 (ISKT…FLYM), 133–153 (ITYK…FPAI), 174–194 (AYFS…LQFV), 208–228 (SLIV…SWMI), and 239–259 (FAYY…TDVF).

It belongs to the UppP family.

Its subcellular location is the cell membrane. It carries out the reaction di-trans,octa-cis-undecaprenyl diphosphate + H2O = di-trans,octa-cis-undecaprenyl phosphate + phosphate + H(+). Functionally, catalyzes the dephosphorylation of undecaprenyl diphosphate (UPP). Confers resistance to bacitracin. In Bacillus cereus (strain ZK / E33L), this protein is Undecaprenyl-diphosphatase 4.